Reading from the N-terminus, the 67-residue chain is Large ribosomal subunit protein bL35 (67 aa).

The protein belongs to the bacterial ribosomal protein bL35 family.

The sequence is that of Large ribosomal subunit protein bL35 from Methylorubrum populi (strain ATCC BAA-705 / NCIMB 13946 / BJ001) (Methylobacterium populi).